Reading from the N-terminus, the 501-residue chain is Cytochrome P450 76M5 (501 aa).

A helical membrane pass occupies residues 5-25; that stretch reads ELWVLAAALAVSLLYYLAALM. A heme-binding site is contributed by cysteine 443.

The protein belongs to the cytochrome P450 family. Heme serves as cofactor.

The protein resides in the membrane. It carries out the reaction ent-sandaracopimaradien-3beta-ol + reduced [NADPH--hemoprotein reductase] + O2 = oryzalexin E + oxidized [NADPH--hemoprotein reductase] + H2O + H(+). Its function is as follows. Enzyme of the diterpenoid metabolism involved in the biosynthesis of the oryzalexin class of phytoalexins. Hydroxylates ent-sandaracopimaradien. The polypeptide is Cytochrome P450 76M5 (Oryza sativa subsp. japonica (Rice)).